We begin with the raw amino-acid sequence, 307 residues long: Ribonuclease Z (307 aa).

Residues His63, His65, Asp67, His68, His140, Asp211, and His269 each coordinate Zn(2+). Asp67 serves as the catalytic Proton acceptor.

It belongs to the RNase Z family. In terms of assembly, homodimer. It depends on Zn(2+) as a cofactor.

It catalyses the reaction Endonucleolytic cleavage of RNA, removing extra 3' nucleotides from tRNA precursor, generating 3' termini of tRNAs. A 3'-hydroxy group is left at the tRNA terminus and a 5'-phosphoryl group is left at the trailer molecule.. Zinc phosphodiesterase, which displays some tRNA 3'-processing endonuclease activity. Probably involved in tRNA maturation, by removing a 3'-trailer from precursor tRNA. The polypeptide is Ribonuclease Z (Bacillus licheniformis (strain ATCC 14580 / DSM 13 / JCM 2505 / CCUG 7422 / NBRC 12200 / NCIMB 9375 / NCTC 10341 / NRRL NRS-1264 / Gibson 46)).